Reading from the N-terminus, the 262-residue chain is Phosphonates import ATP-binding protein PhnC (262 aa).

The ABC transporter domain occupies 5–253 (IRVEKLAKTF…RFDHLYRSIN (249 aa)). 37–44 (GPSGSGKS) lines the ATP pocket.

It belongs to the ABC transporter superfamily. Phosphonates importer (TC 3.A.1.9.1) family. As to quaternary structure, the complex is composed of two ATP-binding proteins (PhnC), two transmembrane proteins (PhnE) and a solute-binding protein (PhnD).

The protein resides in the cell inner membrane. It catalyses the reaction phosphonate(out) + ATP + H2O = phosphonate(in) + ADP + phosphate + H(+). Part of the ABC transporter complex PhnCDE involved in phosphonates import. Responsible for energy coupling to the transport system. The protein is Phosphonates import ATP-binding protein PhnC of Escherichia coli O6:K15:H31 (strain 536 / UPEC).